The sequence spans 33 residues: NAD-reducing hydrogenase HoxS subunit gamma (33 aa).

Residues 1–33 enclose the 2Fe-2S ferredoxin-type domain; it reads SIEIEIDGVTVTTEESRTLVDVAAEAGVYIPTL.

This sequence belongs to the complex I 75 kDa subunit family. In terms of assembly, tetramer of an alpha and a gamma subunits (flavin-containing dimer), and a delta and a nickel-containing beta subunits (hydrogenase dimer). The cofactor is [4Fe-4S] cluster.

The protein resides in the cytoplasm. It catalyses the reaction H2 + NAD(+) = NADH + H(+). Functionally, subunits alpha and gamma of HoxS constitute an NADH--oxidoreductase. The polypeptide is NAD-reducing hydrogenase HoxS subunit gamma (hoxU) (Rhodococcus opacus (Nocardia opaca)).